A 463-amino-acid polypeptide reads, in one-letter code: MAALRALCGFRGVAAQVLRPGAGVRLPIQPSRGVRQWQPDVEWAQQFGGAVMYPSKETAHWKPPPWNDVDPPKDTIVKNMTLNFGPQHPAAHGVLRLVMELSGEMVRKCDPHIGLLHRGTEKLIEYKTYLQALPYFDRLDYVSMMCNEQAYSLAVEKLLNIRPPPRAQWIRVLFGEITRLLNHIMAVTTHALDLGAMTPFFWLFEEREKMFEFYERVSGARMHAAYIRPGGVHQDLPLGLMDDIYQFSKNFSLRLDELEELLTNNRIWRNRTIDIGVVTAEEALNYGFSGVMLRGSGIQWDLRKTQPYDVYDQVEFDVPVGSRGDCYDRYLCRVEEMRQSLRIIAQCLNKMPPGEIKVDDAKVSPPKRAEMKTSMESLIHHFKLYTEGYQVPPGATYTAIEAPKGEFGVYLVSDGSSRPYRCKIKAPGFAHLAGLDKMSKGHMLADVVAIIGTQDIVFGEVDR.

Residues 1 to 33 (MAALRALCGFRGVAAQVLRPGAGVRLPIQPSRG) constitute a mitochondrion transit peptide. Position 62 is an N6-acetyllysine (K62). R118 carries the post-translational modification Symmetric dimethylarginine. The [4Fe-4S] cluster site is built by C326, C332, and C347.

It belongs to the complex I 49 kDa subunit family. As to quaternary structure, core subunit of respiratory chain NADH dehydrogenase (Complex I) which is composed of 45 different subunits. Component of the iron-sulfur (IP) fragment of the enzyme. Interacts with NDUFAF3. Interacts with NDUFAF7. Interacts with CERS2. [4Fe-4S] cluster is required as a cofactor. In terms of processing, dimethylation at Arg-118 by NDUFAF7 takes place after NDUFS2 assembles into the complex I, leading to stabilize the early intermediate complex.

Its subcellular location is the mitochondrion inner membrane. The enzyme catalyses a ubiquinone + NADH + 5 H(+)(in) = a ubiquinol + NAD(+) + 4 H(+)(out). Core subunit of the mitochondrial membrane respiratory chain NADH dehydrogenase (Complex I) which catalyzes electron transfer from NADH through the respiratory chain, using ubiquinone as an electron acceptor. Essential for the catalytic activity and assembly of complex I. Redox-sensitive, critical component of the oxygen-sensing pathway in the pulmonary vasculature which plays a key role in acute pulmonary oxygen-sensing and hypoxic pulmonary vasoconstriction. Plays an important role in carotid body sensing of hypoxia. Essential for glia-like neural stem and progenitor cell proliferation, differentiation and subsequent oligodendrocyte or neuronal maturation. The sequence is that of NADH dehydrogenase [ubiquinone] iron-sulfur protein 2, mitochondrial (NDUFS2) from Pan troglodytes (Chimpanzee).